A 932-amino-acid polypeptide reads, in one-letter code: 3-hydroxy-3-methylglutaryl-coenzyme A reductase (932 aa).

6 helical membrane passes run 20–40, 59–79, 92–112, 113–133, 162–182, and 193–213; these read VIVC…FTGL, LSSD…YLYL, ILGI…SAVI, HLFG…LLLI, MAIL…VISI, and VFCC…MTFF. Asparagine 279 carries an N-linked (GlcNAc...) asparagine glycan. The helical transmembrane segment at 322-342 threads the bilayer; that stretch reads ILTAILATVLASHYIFFSDLA. The linker stretch occupies residues 343-467; that stretch reads TYPEKRVSIM…APRPMPELLE (125 aa). Positions 357–367 are enriched in basic and acidic residues; it reads VVNPGSDHEDA. The segment at 357–442 is disordered; it reads VVNPGSDHED…SGSEDEEEEV (86 aa). A compositionally biased stretch (polar residues) spans 374–403; the sequence is GTLSSSPSTSDVRVIESMTSRTQACQTDPV. Over residues 406–421 the composition is skewed to low complexity; it reads SPRNSRSSSPVSSHSV. The segment at 468-932 is catalytic; that stretch reads ILNVGKGPNA…APGTCTANAS (465 aa). Residues glutamate 575, lysine 707, and aspartate 783 each act as charge relay system in the active site. Asparagine 850 carries an N-linked (GlcNAc...) asparagine glycan. The Proton donor role is filled by histidine 882. Asparagine 886 carries an N-linked (GlcNAc...) asparagine glycan. A Phosphoserine; by AMPK modification is found at serine 888.

It belongs to the HMG-CoA reductase family.

It is found in the endoplasmic reticulum membrane. The enzyme catalyses (R)-mevalonate + 2 NADP(+) + CoA = (3S)-3-hydroxy-3-methylglutaryl-CoA + 2 NADPH + 2 H(+). Its pathway is metabolic intermediate biosynthesis; (R)-mevalonate biosynthesis; (R)-mevalonate from acetyl-CoA: step 3/3. Its function is as follows. This transmembrane glycoprotein is involved in the control of cholesterol biosynthesis. It is the rate-limiting enzyme of sterol biosynthesis. In Strongylocentrotus purpuratus (Purple sea urchin), this protein is 3-hydroxy-3-methylglutaryl-coenzyme A reductase (HMGCR).